An 88-amino-acid chain; its full sequence is Conotoxin MaIr34 (88 aa).

The signal sequence occupies residues 1 to 21 (MKLTCVIVAVLFLTAWTFVMA). Residues 22-53 (DDPRDGPDTAVRGGKRFWKARNEMNSAASKLN) constitute a propeptide that is removed on maturation. Cystine bridges form between C57-C75, C64-C79, and C74-C83.

Belongs to the conotoxin O1 superfamily. Expressed by the venom duct.

The protein resides in the secreted. The polypeptide is Conotoxin MaIr34 (Conus marmoreus (Marble cone)).